The primary structure comprises 142 residues: Large ribosomal subunit protein uL13 (142 aa).

Belongs to the universal ribosomal protein uL13 family. As to quaternary structure, part of the 50S ribosomal subunit.

In terms of biological role, this protein is one of the early assembly proteins of the 50S ribosomal subunit, although it is not seen to bind rRNA by itself. It is important during the early stages of 50S assembly. This is Large ribosomal subunit protein uL13 from Shewanella denitrificans (strain OS217 / ATCC BAA-1090 / DSM 15013).